The following is a 327-amino-acid chain: Probable serine/threonine-protein kinase WNK5 (327 aa).

Residues 1-48 (MPPNPTPPRRATTTTTRATSGVRRGEEEQGGMAVSASAGEEEEAFEEV) form a disordered region. Residues 9–19 (RRATTTTTRAT) are compositionally biased toward low complexity. Residues 39 to 48 (GEEEEAFEEV) are compositionally biased toward acidic residues. The 260-residue stretch at 55–314 (GRYADVLGLG…AAELLRDPFF (260 aa)) folds into the Protein kinase domain. Position 136 to 139 (136 to 139 (TEVC)) interacts with ATP. Catalysis depends on D203, which acts as the Proton acceptor.

It belongs to the protein kinase superfamily. Ser/Thr protein kinase family. WNK subfamily.

The catalysed reaction is L-seryl-[protein] + ATP = O-phospho-L-seryl-[protein] + ADP + H(+). It carries out the reaction L-threonyl-[protein] + ATP = O-phospho-L-threonyl-[protein] + ADP + H(+). In Oryza sativa subsp. japonica (Rice), this protein is Probable serine/threonine-protein kinase WNK5 (WNK5).